The primary structure comprises 103 residues: N(4)-acetylcytidine amidohydrolase (103 aa).

The ASCH domain maps to 6–100; it reads ITFFQRFQND…NQMQFYVIDF (95 aa). Catalysis depends on Lys21, which acts as the Proton acceptor. Residue Thr24 is the Nucleophile of the active site. Glu74 serves as the catalytic Proton donor.

Belongs to the N(4)-acetylcytidine amidohydrolase family.

It carries out the reaction N(4)-acetylcytidine + H2O = cytidine + acetate + H(+). The enzyme catalyses N(4)-acetyl-2'-deoxycytidine + H2O = 2'-deoxycytidine + acetate + H(+). It catalyses the reaction N(4)-acetylcytosine + H2O = cytosine + acetate + H(+). Functionally, catalyzes the hydrolysis of N(4)-acetylcytidine (ac4C). The chain is N(4)-acetylcytidine amidohydrolase (yqfB) from Salmonella arizonae (strain ATCC BAA-731 / CDC346-86 / RSK2980).